The primary structure comprises 193 residues: MRLCDRDIEAWLDEGRLSINPRPPVERINGATVDVRLGNKFRTFRGHTAAFIDLSGPKDEVSAALDRVMSDEIVLDESEAFYLHPGELALAVTLESVTLPADLVGWLDGRSSLARLGLMVHVTAHRIDPGWSGCIVLEFYNSGKLPLALRPGMLIGALSFEPLSGPAARPYNRREDAKYRNQQGAVASRIDKD.

Residues 110–115 (RSSLAR), aspartate 128, 136–138 (VLE), tyrosine 171, lysine 178, and glutamine 182 contribute to the dCTP site. Glutamate 138 serves as the catalytic Proton donor/acceptor. The segment at 169-193 (RPYNRREDAKYRNQQGAVASRIDKD) is disordered.

Belongs to the dCTP deaminase family. Homotrimer.

The enzyme catalyses dCTP + H2O + H(+) = dUTP + NH4(+). It participates in pyrimidine metabolism; dUMP biosynthesis; dUMP from dCTP (dUTP route): step 1/2. Functionally, catalyzes the deamination of dCTP to dUTP. The sequence is that of dCTP deaminase from Escherichia coli O1:K1 / APEC.